We begin with the raw amino-acid sequence, 400 residues long: Putative zinc-binding protein ORF78 (400 aa).

Residues 9–33 (LPRKRRAVAQPRTRQPPPKVHREDT) are disordered.

In Ictalurid herpesvirus 1 (strain Auburn) (IcHV-1), this protein is Putative zinc-binding protein ORF78 (ORF78).